Consider the following 122-residue polypeptide: MIQNESRLKVADNSGARELLVIRVLGGSKRKTGNIGDIVVCTVKQATPGGVVKKGDVVKAVIVRTKSGARREDGSYIKFDENAGVIINADKSPRGTRIFGPVARELRENDFMKIVSLAPEVL.

It belongs to the universal ribosomal protein uL14 family. Part of the 50S ribosomal subunit. Forms a cluster with proteins L3 and L19. In the 70S ribosome, L14 and L19 interact and together make contacts with the 16S rRNA in bridges B5 and B8.

Its function is as follows. Binds to 23S rRNA. Forms part of two intersubunit bridges in the 70S ribosome. This is Large ribosomal subunit protein uL14 from Lactobacillus acidophilus (strain ATCC 700396 / NCK56 / N2 / NCFM).